The sequence spans 313 residues: Glyoxylate/hydroxypyruvate reductase A (313 aa).

Arg228 is an active-site residue. The Proton donor role is filled by His276.

The protein belongs to the D-isomer specific 2-hydroxyacid dehydrogenase family. GhrA subfamily.

It localises to the cytoplasm. It carries out the reaction glycolate + NADP(+) = glyoxylate + NADPH + H(+). The enzyme catalyses (R)-glycerate + NAD(+) = 3-hydroxypyruvate + NADH + H(+). The catalysed reaction is (R)-glycerate + NADP(+) = 3-hydroxypyruvate + NADPH + H(+). In terms of biological role, catalyzes the NADPH-dependent reduction of glyoxylate and hydroxypyruvate into glycolate and glycerate, respectively. In Yersinia enterocolitica serotype O:8 / biotype 1B (strain NCTC 13174 / 8081), this protein is Glyoxylate/hydroxypyruvate reductase A.